We begin with the raw amino-acid sequence, 211 residues long: Formate dehydrogenase, cytochrome b556(fdo) subunit (211 aa).

Residues 1 to 17 are Cytoplasmic-facing; the sequence is MKRRDTIVRYTAPERIN. Histidine 18 is a binding site for heme b. A helical membrane pass occupies residues 18–32; that stretch reads HWITAFCFILAAVSG. The Periplasmic segment spans residues 33–53; it reads LGFLFPSFNWLMQIMGTPQLA. The chain crosses the membrane as a helical span at residues 54 to 72; it reads RILHPFVGVVMFASFIIMF. Histidine 57 provides a ligand contact to heme b. Over 73–112 the chain is Cytoplasmic; the sequence is FRYWHHNLINRDDIFWAKNIRKIVVNEEVGDTGRYNFGQK. Residues 113–130 form a helical membrane-spanning segment; the sequence is CVFWAAIIFLVLLLVSGV. Residues 131–151 lie on the Periplasmic side of the membrane; that stretch reads IIWRPYFAPAFSIPVIRFALM. The chain crosses the membrane as a helical span at residues 152–170; sequence LHSFAAVALIVVIMVHIYA. Positions 153 and 167 each coordinate heme b. Topologically, residues 171–211 are cytoplasmic; it reads ALWVKGTITAMVEGWVTSAWAKKHHPRWYREVRKTTEKKAE.

Belongs to the formate dehydrogenase gamma subunit family. In terms of assembly, formate dehydrogenase is a membrane-bound complex, formed by subunits alpha, beta and gamma. The cofactor is heme.

Its subcellular location is the cell inner membrane. Allows to use formate as major electron donor during aerobic respiration. Subunit gamma is probably the cytochrome b556(FDO) component of the formate dehydrogenase. The chain is Formate dehydrogenase, cytochrome b556(fdo) subunit (fdoI) from Escherichia coli O157:H7.